We begin with the raw amino-acid sequence, 97 residues long: Putative septation protein SpoVG (97 aa).

This sequence belongs to the SpoVG family.

Its function is as follows. Could be involved in septation. This is Putative septation protein SpoVG from Borreliella afzelii (strain PKo) (Borrelia afzelii).